Here is a 620-residue protein sequence, read N- to C-terminus: Proline--tRNA ligase (620 aa).

It belongs to the class-II aminoacyl-tRNA synthetase family. ProS type 1 subfamily. Homodimer.

It is found in the cytoplasm. The catalysed reaction is tRNA(Pro) + L-proline + ATP = L-prolyl-tRNA(Pro) + AMP + diphosphate. Functionally, catalyzes the attachment of proline to tRNA(Pro) in a two-step reaction: proline is first activated by ATP to form Pro-AMP and then transferred to the acceptor end of tRNA(Pro). As ProRS can inadvertently accommodate and process non-cognate amino acids such as alanine and cysteine, to avoid such errors it has two additional distinct editing activities against alanine. One activity is designated as 'pretransfer' editing and involves the tRNA(Pro)-independent hydrolysis of activated Ala-AMP. The other activity is designated 'posttransfer' editing and involves deacylation of mischarged Ala-tRNA(Pro). The misacylated Cys-tRNA(Pro) is not edited by ProRS. The polypeptide is Proline--tRNA ligase (Streptococcus thermophilus (strain CNRZ 1066)).